A 466-amino-acid polypeptide reads, in one-letter code: Ribulose bisphosphate carboxylase large chain (466 aa).

Residue Lys-5 is modified to N6,N6,N6-trimethyllysine. Residues Asn-114 and Thr-164 each coordinate substrate. Lys-166 acts as the Proton acceptor in catalysis. Lys-168 contributes to the substrate binding site. The Mg(2+) site is built by Lys-192, Asp-194, and Glu-195. Lys-192 bears the N6-carboxylysine mark. His-285 functions as the Proton acceptor in the catalytic mechanism. Residues Arg-286, His-318, and Ser-370 each contribute to the substrate site.

The protein belongs to the RuBisCO large chain family. Type I subfamily. As to quaternary structure, heterohexadecamer of 8 large chains and 8 small chains; disulfide-linked. The disulfide link is formed within the large subunit homodimers. The cofactor is Mg(2+). Post-translationally, the disulfide bond which can form in the large chain dimeric partners within the hexadecamer appears to be associated with oxidative stress and protein turnover.

It localises to the plastid. The protein resides in the chloroplast. It catalyses the reaction 2 (2R)-3-phosphoglycerate + 2 H(+) = D-ribulose 1,5-bisphosphate + CO2 + H2O. The catalysed reaction is D-ribulose 1,5-bisphosphate + O2 = 2-phosphoglycolate + (2R)-3-phosphoglycerate + 2 H(+). In terms of biological role, ruBisCO catalyzes two reactions: the carboxylation of D-ribulose 1,5-bisphosphate, the primary event in carbon dioxide fixation, as well as the oxidative fragmentation of the pentose substrate in the photorespiration process. Both reactions occur simultaneously and in competition at the same active site. This is Ribulose bisphosphate carboxylase large chain from Betula nigra (River birch).